The primary structure comprises 490 residues: Dipeptide and tripeptide permease A (490 aa).

Over 1-34 the chain is Cytoplasmic; sequence MSNANNNQPENVSLNAFKQPRAFYLIFSIELWER. Residues 35–55 traverse the membrane as a helical segment; the sequence is FGYYGLQGIMAVYLVKMLGMT. The Periplasmic segment spans residues 56–59; the sequence is EADS. A helical membrane pass occupies residues 60-80; sequence ITLFSSFSALVYGFVAIGGWL. The Cytoplasmic portion of the chain corresponds to 81-89; sequence GDKVLGAKR. Residues 90-110 traverse the membrane as a helical segment; sequence VIMLGALVLAIGYAFVAYSGH. Position 111 (D111) is a topological domain, periplasmic. A helical membrane pass occupies residues 112-132; that stretch reads LSLVYVGMATIAVGNGLFKAN. Residues 133–153 are Cytoplasmic-facing; the sequence is PSSLLSTCYEKNDPRLDGAFT. Residues 154–174 traverse the membrane as a helical segment; the sequence is MYYMSVNIGSFFSMLATPWLA. At 175–176 the chain is on the periplasmic side; sequence AR. A helical membrane pass occupies residues 177 to 197; the sequence is FGWSVAFSLSVVGMLITLVNF. Residues 198-217 lie on the Cytoplasmic side of the membrane; the sequence is MMCRRWVKDQGSKPDFAPLQ. The helical transmembrane segment at 218–238 threads the bilayer; the sequence is VGKLMMTLVGVVILVAISTWL. Topologically, residues 239-246 are periplasmic; sequence LHNQTIAR. A helical membrane pass occupies residues 247-267; that stretch reads WALAIISAGIILIFAKETFAL. Over 268 to 274 the chain is Cytoplasmic; the sequence is QGGARRK. Residues 275–295 form a helical membrane-spanning segment; the sequence is MIVAFLLMLEAVVFFVLYSQM. Topologically, residues 296-320 are periplasmic; that stretch reads PTSLNFFAIHNVEHSIFGIAFEPEQ. The helical transmembrane segment at 321 to 341 threads the bilayer; it reads YQALNPFWIMVASPILAAIYN. The Cytoplasmic segment spans residues 342–352; it reads KMGDRLPMPHK. Residues 353–373 traverse the membrane as a helical segment; the sequence is FAIGMVLCSGAFLVLPWGASF. Residues 374–383 are Periplasmic-facing; it reads ANEAGIVSVN. Residues 384–404 traverse the membrane as a helical segment; the sequence is WLILSYALQSIGELMISGLGL. Residues 405 to 414 lie on the Cytoplasmic side of the membrane; it reads AMVAQLVPQR. The helical transmembrane segment at 415 to 435 threads the bilayer; it reads LMGFIMGSWFLTTAAAALIAG. Topologically, residues 436 to 460 are periplasmic; it reads KVAALTAVPGGEVADPHASLAIYSH. The chain crosses the membrane as a helical span at residues 461 to 481; the sequence is VFMQIGLATAVIAVLMLLTAP. The Cytoplasmic segment spans residues 482-490; that stretch reads KLNRMTLGD.

The protein belongs to the major facilitator superfamily. Proton-dependent oligopeptide transporter (POT/PTR) (TC 2.A.17) family. DtpA subfamily.

The protein localises to the cell inner membrane. Proton-dependent permease that transports di- and tripeptides. In Edwardsiella piscicida, this protein is Dipeptide and tripeptide permease A.